A 199-amino-acid chain; its full sequence is Small ribosomal subunit protein uS14m (199 aa).

The segment at 28–67 (LSTPAPEPAKPSSEETTESTEPATSVEDAGEPMKEKRITQ) is disordered.

It belongs to the universal ribosomal protein uS14 family. Component of the mitochondrial ribosome small subunit (28S) which comprises a 12S rRNA and about 30 distinct proteins. Interacts with LIAT1.

It localises to the mitochondrion. The chain is Small ribosomal subunit protein uS14m (mrps-14) from Caenorhabditis elegans.